A 529-amino-acid polypeptide reads, in one-letter code: T-complex protein 1 subunit beta (529 aa).

The protein belongs to the TCP-1 chaperonin family. In terms of assembly, heterooligomeric complex of about 850 to 900 kDa that forms two stacked rings, 12 to 16 nm in diameter.

It is found in the cytoplasm. Its function is as follows. Molecular chaperone; assists the folding of proteins upon ATP hydrolysis. Known to play a role, in vitro, in the folding of actin and tubulin. The polypeptide is T-complex protein 1 subunit beta (cct-2) (Caenorhabditis elegans).